Consider the following 195-residue polypeptide: Interferon tau-2 (195 aa).

Positions 1–23 (MAFVLSLLMALVLVSYGPGGSLG) are cleaved as a signal peptide. Intrachain disulfides connect Cys24/Cys122 and Cys52/Cys162.

This sequence belongs to the alpha/beta interferon family. IFN-alphaII subfamily. Constitutively and exclusively expressed in the mononuclear cells of the extraembryonic trophectoderm.

It localises to the secreted. Paracrine hormone primarily responsible for maternal recognition of pregnancy. Interacts with endometrial receptors, probably type I interferon receptors, and blocks estrogen receptor expression, preventing the estrogen-induced increase in oxytocin receptor expression in the endometrium. This results in the suppression of the pulsatile endometrial release of the luteolytic hormone prostaglandin F2-alpha, hindering the regression of the corpus luteum (luteolysis) and therefore a return to ovarian cyclicity. This, and a possible direct effect of IFN-tau on prostaglandin synthesis, leads in turn to continued ovarian progesterone secretion, which stimulates the secretion by the endometrium of the nutrients required for the growth of the conceptus. In summary, displays particularly high antiviral and antiproliferative potency concurrently with particular weak cytotoxicity, high antiluteolytic activity and immunomodulatory properties. In contrast with other IFNs, IFN-tau is not virally inducible. The sequence is that of Interferon tau-2 (IFNT2) from Ovis aries (Sheep).